Consider the following 186-residue polypeptide: ATP synthase subunit delta (186 aa).

This sequence belongs to the ATPase delta chain family. As to quaternary structure, F-type ATPases have 2 components, F(1) - the catalytic core - and F(0) - the membrane proton channel. F(1) has five subunits: alpha(3), beta(3), gamma(1), delta(1), epsilon(1). F(0) has three main subunits: a(1), b(2) and c(10-14). The alpha and beta chains form an alternating ring which encloses part of the gamma chain. F(1) is attached to F(0) by a central stalk formed by the gamma and epsilon chains, while a peripheral stalk is formed by the delta and b chains.

Its subcellular location is the cell inner membrane. In terms of biological role, f(1)F(0) ATP synthase produces ATP from ADP in the presence of a proton or sodium gradient. F-type ATPases consist of two structural domains, F(1) containing the extramembraneous catalytic core and F(0) containing the membrane proton channel, linked together by a central stalk and a peripheral stalk. During catalysis, ATP synthesis in the catalytic domain of F(1) is coupled via a rotary mechanism of the central stalk subunits to proton translocation. This protein is part of the stalk that links CF(0) to CF(1). It either transmits conformational changes from CF(0) to CF(1) or is implicated in proton conduction. This is ATP synthase subunit delta from Bacteroides fragilis (strain ATCC 25285 / DSM 2151 / CCUG 4856 / JCM 11019 / LMG 10263 / NCTC 9343 / Onslow / VPI 2553 / EN-2).